Here is a 206-residue protein sequence, read N- to C-terminus: High frequency lysogenization protein HflD homolog (206 aa).

The protein belongs to the HflD family.

Its subcellular location is the cytoplasm. It is found in the cell inner membrane. This is High frequency lysogenization protein HflD homolog from Ectopseudomonas mendocina (strain ymp) (Pseudomonas mendocina).